The following is a 332-amino-acid chain: DNA-directed RNA polymerase subunit alpha (332 aa).

The interval 1–244 is alpha N-terminal domain (alpha-NTD); sequence MKKHAKVYYS…AHLNLLADVE (244 aa). The tract at residues 259 to 332 is alpha C-terminal domain (alpha-CTD); the sequence is IKEEPIRRFS…NYKNENKGEN (74 aa).

It belongs to the RNA polymerase alpha chain family. As to quaternary structure, homodimer. The RNAP catalytic core consists of 2 alpha, 1 beta, 1 beta' and 1 omega subunit. When a sigma factor is associated with the core the holoenzyme is formed, which can initiate transcription.

The catalysed reaction is RNA(n) + a ribonucleoside 5'-triphosphate = RNA(n+1) + diphosphate. In terms of biological role, DNA-dependent RNA polymerase catalyzes the transcription of DNA into RNA using the four ribonucleoside triphosphates as substrates. In Mesomycoplasma hyopneumoniae (strain 7448) (Mycoplasma hyopneumoniae), this protein is DNA-directed RNA polymerase subunit alpha.